We begin with the raw amino-acid sequence, 631 residues long: Mini-chromosome maintenance complex-binding protein (631 aa).

2 stretches are compositionally biased toward polar residues: residues 148–157 (ARVVPSTSYV) and 173–192 (TQCQ…SESH). The disordered stretch occupies residues 148-218 (ARVVPSTSYV…SSSSHCTSSL (71 aa)). Residues 193-202 (GNTEPKRQET) show a composition bias toward basic and acidic residues. The span at 206-217 (SQDSSSSHCTSS) shows a compositional bias: low complexity.

It belongs to the MCMBP family. Interacts with the mcm complex: associates with the mcm3-7 complex which lacks mcm2, while it does not interact with the mcm complex when mcm2 is present (mcm2-7 complex).

Its subcellular location is the nucleus. Functionally, associated component of the mcm complex that acts as a regulator of DNA replication. Binds to the MCM complex during late S phase and promotes the disassembly of the mcm complex from chromatin, thereby acting as a key regulator of pre-replication complex (pre-RC) unloading from replicated DNA. Can dissociate the mcm complex without addition of ATP; probably acts by destabilizing interactions of each individual subunits of the mcm complex. Required for sister chromatid cohesion. The polypeptide is Mini-chromosome maintenance complex-binding protein (mcmbp) (Danio rerio (Zebrafish)).